Here is a 1338-residue protein sequence, read N- to C-terminus: Aldehyde oxidase 1 (1338 aa).

The 88-residue stretch at 5 to 92 (SELLFYVNGR…GTAVTTVEGI (88 aa)) folds into the 2Fe-2S ferredoxin-type domain. Positions 113 and 151 each coordinate Mo-molybdopterin. The region spanning 236 to 421 (FGSERMMWFS…VSVNIPYSRK (186 aa)) is the FAD-binding PCMH-type domain. FAD-binding positions include 264-271 (VIMGNTSV), alanine 345, serine 354, histidine 358, aspartate 367, and leucine 411. Mo-molybdopterin is bound by residues 806 to 807 (AF) and methionine 1047. Serine 1068 carries the post-translational modification Phosphoserine. Residues 1088–1091 (GSVV), glutamine 1203, and leucine 1268 contribute to the Mo-molybdopterin site. The active-site Proton acceptor; for azaheterocycle hydroxylase activity is the glutamate 1270.

It belongs to the xanthine dehydrogenase family. Homodimer. The cofactor is [2Fe-2S] cluster. FAD serves as cofactor. Requires Mo-molybdopterin as cofactor. Detected at high levels in liver, also detected in lung, kidney, lacrimal gland and olfactory mucosa.

The protein resides in the cytoplasm. It catalyses the reaction an aldehyde + O2 + H2O = a carboxylate + H2O2 + H(+). The enzyme catalyses retinal + O2 + H2O = retinoate + H2O2 + H(+). In terms of biological role, oxidase with broad substrate specificity, oxidizing aromatic azaheterocycles, such as N1-methylnicotinamide, N-methylphthalazinium and phthalazine, as well as aldehydes, such as benzaldehyde, retinal, pyridoxal, and vanillin. Plays a key role in the metabolism of xenobiotics and drugs containing aromatic azaheterocyclic substituents. Participates in the bioactivation of prodrugs such as famciclovir, catalyzing the oxidation step from 6-deoxypenciclovir to penciclovir, which is a potent antiviral agent. Is probably involved in the regulation of reactive oxygen species homeostasis. May be a prominent source of superoxide generation via the one-electron reduction of molecular oxygen. May also catalyze nitric oxide (NO) production via the reduction of nitrite to NO with NADH or aldehyde as electron donor. May play a role in adipogenesis. The sequence is that of Aldehyde oxidase 1 (AOX1) from Macaca fascicularis (Crab-eating macaque).